We begin with the raw amino-acid sequence, 114 residues long: Small ribosomal subunit protein bS16 (114 aa).

It belongs to the bacterial ribosomal protein bS16 family.

The protein is Small ribosomal subunit protein bS16 of Prochlorococcus marinus subsp. pastoris (strain CCMP1986 / NIES-2087 / MED4).